Reading from the N-terminus, the 315-residue chain is Olfactory receptor 3A10 (315 aa).

Residues 1–28 are Extracellular-facing; it reads MEPGAWGNRTAVTDFILLGLTGNVRLQP. The N-linked (GlcNAc...) asparagine glycan is linked to Asn8. A helical transmembrane segment spans residues 29-49; that stretch reads ILFVVFFFAYIVTVGGNLSIL. The Cytoplasmic segment spans residues 50–68; that stretch reads AAIFVEPKLHTPMYYFLGN. Residues 69–89 traverse the membrane as a helical segment; the sequence is LSLLDIGCISVTVPPMLVCLL. The Extracellular segment spans residues 90 to 97; sequence AHECRVPY. A helical transmembrane segment spans residues 98–118; sequence AACISQLFFFHLLAGVDCHLL. Cys100 and Cys192 are oxidised to a cystine. Residues 119–145 lie on the Cytoplasmic side of the membrane; the sequence is TAMAYDRYLAICQPLTYSTRMSREVQG. Residues 146 to 166 traverse the membrane as a helical segment; sequence TLVGICCTVSFINALTHTVAV. Topologically, residues 167-200 are extracellular; sequence SVLDFCGPNVVNHFYCDLPPLFQLSCSSIYLNGQ. The chain crosses the membrane as a helical span at residues 201 to 221; sequence LLFVGATFMGVVPMILISVSY. Residues 222–239 lie on the Cytoplasmic side of the membrane; sequence AHVAAAVLRIRSTEGRKK. A helical transmembrane segment spans residues 240–260; sequence AFSTCGSHLTVVCIFYGTGFF. The Extracellular segment spans residues 261-274; the sequence is SYMRLGSVSASDKD. A helical transmembrane segment spans residues 275-295; sequence KGIGILNTILSPMLNPLIYSL. Topologically, residues 296 to 315 are cytoplasmic; the sequence is RNPDVQGALKRVLTGKRYPV.

Belongs to the G-protein coupled receptor 1 family.

The protein localises to the cell membrane. Functionally, odorant receptor. The sequence is that of Olfactory receptor 3A10 from Mus musculus (Mouse).